The sequence spans 423 residues: TPR repeat-containing protein YpiA (423 aa).

9 TPR repeats span residues 33–66, 67–100, 135–168, 171–204, 238–271, 272–305, 306–339, 340–373, and 374–407; these read DEDKAIAAQLYYEWGDVEKAISLISDLHDLYPNE, TELTNFYAELLIDIDEEEKALAVLETIPETDPSY, PVIDFALGELYFAQGAYAKAVQYFKTTAEEQSEI, VNVHQRLAESLSASGEFEDAIPWYEKAVDENPDP, TSLYMPLSKSYEAEGMYEEALKTAKEGIRYDEYN, KELFLYAAKMALKIGKSEEGKKLLQEALALDPGF, VEALHTLLAVYHKEEDYDQIIDLIQEVRSYGEED, PKYNWYLASAYTELEQYEEAKQSFEAAYLHYRED, and RDFLYEYASFLLEEGLQKEALPLLKKVLEMDGAN.

As to quaternary structure, interacts with the RNA polymerase core.

The chain is TPR repeat-containing protein YpiA (ypiA) from Bacillus subtilis (strain 168).